The primary structure comprises 302 residues: Polyamine aminopropyltransferase (302 aa).

Positions 4 to 239 constitute a PABS domain; that stretch reads WTWHLEWQTP…GLWGFIYASD (236 aa). Gln33 lines the S-methyl-5'-thioadenosine pocket. The spermidine site is built by His64 and Glu88. S-methyl-5'-thioadenosine contacts are provided by residues Asp108 and 140–141; that span reads DG. Asp158 acts as the Proton acceptor in catalysis. S-methyl-5'-thioadenosine is bound at residue Pro167.

Belongs to the spermidine/spermine synthase family. In terms of assembly, homodimer or homotetramer.

It is found in the cytoplasm. The enzyme catalyses S-adenosyl 3-(methylsulfanyl)propylamine + putrescine = S-methyl-5'-thioadenosine + spermidine + H(+). It participates in amine and polyamine biosynthesis; spermidine biosynthesis; spermidine from putrescine: step 1/1. In terms of biological role, catalyzes the irreversible transfer of a propylamine group from the amino donor S-adenosylmethioninamine (decarboxy-AdoMet) to putrescine (1,4-diaminobutane) to yield spermidine. In Sulfolobus acidocaldarius (strain ATCC 33909 / DSM 639 / JCM 8929 / NBRC 15157 / NCIMB 11770), this protein is Polyamine aminopropyltransferase.